Here is an 886-residue protein sequence, read N- to C-terminus: Cytosolic carboxypeptidase-like protein 5 (886 aa).

The region spanning 157–570 (YPFSYSDCQD…AMAIAALDMA (414 aa)) is the Peptidase M14 domain. The Zn(2+) site is built by H252 and E255. A compositionally biased stretch (polar residues) spans 344–353 (AKSPTNQQPT). Disordered stretches follow at residues 344–363 (AKSP…APLS) and 374–401 (EAHL…KTDP). Residue H434 participates in Zn(2+) binding. The Proton donor/acceptor role is filled by E516. Disordered stretches follow at residues 602-737 (GLTS…RNMG) and 783-846 (TRLQ…PAFS). Polar residues predominate over residues 621–635 (PKSNNSLPVSCSENA). Residues 643–654 (STGTSTGGSSSS) are compositionally biased toward low complexity. A compositionally biased stretch (polar residues) spans 655-666 (QQNSPQMKNSPS). Over residues 714–737 (STTSSLAPSPTLASSGPTSSRNMG) the composition is skewed to low complexity. Over residues 805–815 (SSPTSPIPQTR) the composition is skewed to polar residues. S841 carries the phosphoserine modification.

It belongs to the peptidase M14 family. Zn(2+) is required as a cofactor. Widely expressed. Highly expressed in testis, and moderately in pituitary, brain, eye and kidney.

The protein localises to the cytoplasm. It is found in the cytosol. Its subcellular location is the nucleus. It localises to the cytoskeleton. The protein resides in the spindle. The protein localises to the midbody. It carries out the reaction gamma-L-glutamyl-L-glutamyl-[protein] + H2O = L-glutamyl-[protein] + L-glutamate. The enzyme catalyses (L-glutamyl)(n+1)-gamma-L-glutamyl-L-glutamyl-[protein] + H2O = (L-glutamyl)(n)-gamma-L-glutamyl-L-glutamyl-[protein] + L-glutamate. It catalyses the reaction C-terminal L-alpha-aminoacyl-L-glutamyl-[tubulin] + H2O = C-terminal L-alpha-aminoacyl-[tubulin] + L-glutamate. The catalysed reaction is C-terminal L-alpha-aminoacyl-L-glutamyl-L-glutamyl-[tubulin] + H2O = C-terminal L-alpha-aminoacyl-L-glutamyl-[tubulin] + L-glutamate. Its function is as follows. Metallocarboxypeptidase that mediates deglutamylation of tubulin and non-tubulin target proteins. Catalyzes the removal of polyglutamate side chains present on the gamma-carboxyl group of glutamate residues within the C-terminal tail of alpha- and beta-tubulin. Cleaves alpha- and gamma-linked polyglutamate tubulin side-chain, as well as the branching point glutamate. Also catalyzes the removal of alpha-linked glutamate residues from the carboxy-terminus of alpha-tubulin. Mediates deglutamylation of nucleotidyltransferase CGAS, leading to CGAS antiviral defense response activation. The sequence is that of Cytosolic carboxypeptidase-like protein 5 from Mus musculus (Mouse).